The primary structure comprises 72 residues: Large ribosomal subunit protein bL28 (72 aa).

This sequence belongs to the bacterial ribosomal protein bL28 family.

This Chlorobium limicola (strain DSM 245 / NBRC 103803 / 6330) protein is Large ribosomal subunit protein bL28.